Here is a 288-residue protein sequence, read N- to C-terminus: Bis(5'-nucleosyl)-tetraphosphatase, symmetrical (288 aa).

Belongs to the Ap4A hydrolase family.

The enzyme catalyses P(1),P(4)-bis(5'-adenosyl) tetraphosphate + H2O = 2 ADP + 2 H(+). Functionally, hydrolyzes diadenosine 5',5'''-P1,P4-tetraphosphate to yield ADP. This is Bis(5'-nucleosyl)-tetraphosphatase, symmetrical from Pseudomonas putida (strain GB-1).